Reading from the N-terminus, the 400-residue chain is tRNA-specific adenosine deaminase 1 (400 aa).

The 325-residue stretch at 76–400 (SIATGVKALP…WIPTRTDDVK (325 aa)) folds into the A to I editase domain. A Zn(2+)-binding site is contributed by histidine 101. Glutamate 103 functions as the Proton donor in the catalytic mechanism. Arginine 108 contacts 1D-myo-inositol hexakisphosphate. Zn(2+) is bound by residues cysteine 157 and cysteine 223. Residues lysine 226, arginine 232, lysine 369, and arginine 375 each contribute to the 1D-myo-inositol hexakisphosphate site.

The protein belongs to the ADAT1 family. 1D-myo-inositol hexakisphosphate is required as a cofactor. Zn(2+) serves as cofactor.

It catalyses the reaction adenosine(37) in tRNA(Ala) + H2O + H(+) = inosine(37) in tRNA(Ala) + NH4(+). Deaminates adenosine-37 to inosine in tRNA-Ala. This Saccharomyces cerevisiae (strain ATCC 204508 / S288c) (Baker's yeast) protein is tRNA-specific adenosine deaminase 1 (TAD1).